A 173-amino-acid chain; its full sequence is Photosystem I assembly protein Ycf3 (173 aa).

TPR repeat units follow at residues 35 to 68 (AFSYYRDGMSAQSEGEYAEALENYYEALKLEEDP), 72 to 105 (SYILYNIGLIYASNGEYVKALEYYHQGLELNFKL), and 120 to 153 (GVQAIEDKDTELSKLMFDKAAQYWQQAIKLAPDN).

The protein belongs to the Ycf3 family.

Its subcellular location is the plastid. The protein resides in the chloroplast thylakoid membrane. Its function is as follows. Essential for the assembly of the photosystem I (PSI) complex. May act as a chaperone-like factor to guide the assembly of the PSI subunits. The chain is Photosystem I assembly protein Ycf3 from Pyropia yezoensis (Susabi-nori).